We begin with the raw amino-acid sequence, 260 residues long: Imidazole glycerol phosphate synthase subunit HisF (260 aa).

Catalysis depends on residues aspartate 11 and aspartate 130.

The protein belongs to the HisA/HisF family. Heterodimer of HisH and HisF.

The protein resides in the cytoplasm. It carries out the reaction 5-[(5-phospho-1-deoxy-D-ribulos-1-ylimino)methylamino]-1-(5-phospho-beta-D-ribosyl)imidazole-4-carboxamide + L-glutamine = D-erythro-1-(imidazol-4-yl)glycerol 3-phosphate + 5-amino-1-(5-phospho-beta-D-ribosyl)imidazole-4-carboxamide + L-glutamate + H(+). It participates in amino-acid biosynthesis; L-histidine biosynthesis; L-histidine from 5-phospho-alpha-D-ribose 1-diphosphate: step 5/9. Its function is as follows. IGPS catalyzes the conversion of PRFAR and glutamine to IGP, AICAR and glutamate. The HisF subunit catalyzes the cyclization activity that produces IGP and AICAR from PRFAR using the ammonia provided by the HisH subunit. The sequence is that of Imidazole glycerol phosphate synthase subunit HisF from Caulobacter sp. (strain K31).